We begin with the raw amino-acid sequence, 276 residues long: Large ribosomal subunit protein uL2 (276 aa).

A disordered region spans residues Thr-219–Gly-276. Basic residues predominate over residues Lys-252–Gly-276.

Belongs to the universal ribosomal protein uL2 family. In terms of assembly, part of the 50S ribosomal subunit. Forms a bridge to the 30S subunit in the 70S ribosome.

Functionally, one of the primary rRNA binding proteins. Required for association of the 30S and 50S subunits to form the 70S ribosome, for tRNA binding and peptide bond formation. It has been suggested to have peptidyltransferase activity; this is somewhat controversial. Makes several contacts with the 16S rRNA in the 70S ribosome. This is Large ribosomal subunit protein uL2 from Acholeplasma laidlawii (strain PG-8A).